Reading from the N-terminus, the 408-residue chain is tRNA pseudouridine synthase D (408 aa).

D82 serves as the catalytic Nucleophile. The TRUD domain maps to 157 to 367 (GVPNRFGEQR…MEGERRPLRV (211 aa)).

It belongs to the pseudouridine synthase TruD family.

It catalyses the reaction uridine(13) in tRNA = pseudouridine(13) in tRNA. Functionally, responsible for synthesis of pseudouridine from uracil-13 in transfer RNAs. This Geobacter sulfurreducens (strain ATCC 51573 / DSM 12127 / PCA) protein is tRNA pseudouridine synthase D.